The chain runs to 267 residues: Phosphate import ATP-binding protein PstB (267 aa).

The ABC transporter domain maps to Ile21–Ile262. Gly53–Ser60 lines the ATP pocket.

This sequence belongs to the ABC transporter superfamily. Phosphate importer (TC 3.A.1.7) family. As to quaternary structure, the complex is composed of two ATP-binding proteins (PstB), two transmembrane proteins (PstC and PstA) and a solute-binding protein (PstS).

Its subcellular location is the cell inner membrane. It carries out the reaction phosphate(out) + ATP + H2O = ADP + 2 phosphate(in) + H(+). Its function is as follows. Part of the ABC transporter complex PstSACB involved in phosphate import. Responsible for energy coupling to the transport system. The protein is Phosphate import ATP-binding protein PstB of Mesorhizobium japonicum (strain LMG 29417 / CECT 9101 / MAFF 303099) (Mesorhizobium loti (strain MAFF 303099)).